A 671-amino-acid polypeptide reads, in one-letter code: UvrABC system protein B (671 aa).

In terms of domain architecture, Helicase ATP-binding spans 35-423; that stretch reads KAIIENKKHQ…NHQVVQQIIR (389 aa). 48-55 contacts ATP; it reads GATGTGKT. The Beta-hairpin motif lies at 101–124; sequence NFDFFQPEAYIPSKDLYIDKDSRQ. Positions 440–602 constitute a Helicase C-terminal domain; it reads QIDDIINEIH…IVPKTISKAI (163 aa). In terms of domain architecture, UVR spans 632 to 667; sequence QQTIDNLRQEMLQAAKELDFERAAILRDTIIELENE.

It belongs to the UvrB family. Forms a heterotetramer with UvrA during the search for lesions. Interacts with UvrC in an incision complex.

It is found in the cytoplasm. Its function is as follows. The UvrABC repair system catalyzes the recognition and processing of DNA lesions. A damage recognition complex composed of 2 UvrA and 2 UvrB subunits scans DNA for abnormalities. Upon binding of the UvrA(2)B(2) complex to a putative damaged site, the DNA wraps around one UvrB monomer. DNA wrap is dependent on ATP binding by UvrB and probably causes local melting of the DNA helix, facilitating insertion of UvrB beta-hairpin between the DNA strands. Then UvrB probes one DNA strand for the presence of a lesion. If a lesion is found the UvrA subunits dissociate and the UvrB-DNA preincision complex is formed. This complex is subsequently bound by UvrC and the second UvrB is released. If no lesion is found, the DNA wraps around the other UvrB subunit that will check the other stand for damage. The polypeptide is UvrABC system protein B (Mycoplasma mycoides subsp. mycoides SC (strain CCUG 32753 / NCTC 10114 / PG1)).